Reading from the N-terminus, the 117-residue chain is Large ribosomal subunit protein uL18 (117 aa).

Belongs to the universal ribosomal protein uL18 family. In terms of assembly, part of the 50S ribosomal subunit; part of the 5S rRNA/L5/L18/L25 subcomplex. Contacts the 5S and 23S rRNAs.

Its function is as follows. This is one of the proteins that bind and probably mediate the attachment of the 5S RNA into the large ribosomal subunit, where it forms part of the central protuberance. This chain is Large ribosomal subunit protein uL18, found in Cronobacter sakazakii (strain ATCC BAA-894) (Enterobacter sakazakii).